A 366-amino-acid polypeptide reads, in one-letter code: 15-cis-zeta-carotene isomerase, chloroplastic (366 aa).

Residues 1–45 constitute a chloroplast transit peptide; sequence MASQLRLHLAATPPLLPHRRPHLARPLCPTLNPIRAPLPPLSRVL. Helical transmembrane passes span 94–114, 136–156, 171–191, 203–223, 260–280, and 338–358; these read SWAY…VLWI, EVVM…MASL, VLFA…FINH, GITG…FFLY, VIWC…AASV, and LPYV…PLMQ.

As to expression, expressed in leaves and roots, and at lower levels in embryos and endosperm.

The protein localises to the plastid. It localises to the chloroplast membrane. The enzyme catalyses 9,9',15-tri-cis-zeta-carotene = 9,9'-di-cis-zeta-carotene. In terms of biological role, isomerase involved in the biosynthesis of carotenoids. Catalyzes the cis- to trans-conversion of the 15-cis-bond in 9,15,9'-tri-cis-zeta-carotene. The polypeptide is 15-cis-zeta-carotene isomerase, chloroplastic (Zea mays (Maize)).